Here is a 97-residue protein sequence, read N- to C-terminus: Protein GLUTAMINE DUMPER 7 (97 aa).

Over 1–25 the chain is Extracellular; sequence MSLHRDSMVPVNSRLENMDSPILSK. The chain crosses the membrane as a helical span at residues 26 to 46; it reads ICAWGVMLGLFALSLFAMAYA. The Cytoplasmic segment spans residues 47 to 97; the sequence is CYHKQTSNSCIEEKQGKKQVLKPLDMEPKIVVIMAGNENPTFFAKPTQINA. Positions 78-82 match the VIMAG motif; the sequence is VIMAG.

This sequence belongs to the GLUTAMINE DUMPER 1 (TC 9.B.60) family. As to expression, expressed in the vascular tissues, even in the minor veins of the leaves.

Its subcellular location is the membrane. Probable subunit of an amino acid transporter involved in the regulation of the amino acid metabolism. Stimulates amino acid export by activating nonselective amino acid facilitators. This Arabidopsis thaliana (Mouse-ear cress) protein is Protein GLUTAMINE DUMPER 7 (GDU7).